The chain runs to 570 residues: Periplasmic trehalase (570 aa).

Positions 1–34 (MIPPEIRRSVLLQKAIKLALAGTLLTFASFSATA) are cleaved as a signal peptide. Residues Arg-159, 166–167 (WD), Asn-203, 212–214 (HSQ), 284–286 (RPE), and Gly-317 each bind substrate. Active-site proton donor/acceptor residues include Asp-319 and Glu-503. Residue Glu-518 participates in substrate binding. The disordered stretch occupies residues 544–570 (KPCDSVPSTRPASLSATPTKTPSAATQ). Low complexity predominate over residues 554–570 (PASLSATPTKTPSAATQ).

It belongs to the glycosyl hydrolase 37 family. As to quaternary structure, monomer.

The protein resides in the periplasm. It catalyses the reaction alpha,alpha-trehalose + H2O = alpha-D-glucose + beta-D-glucose. Functionally, provides the cells with the ability to utilize trehalose at high osmolarity by splitting it into glucose molecules that can subsequently be taken up by the phosphotransferase-mediated uptake system. In Salmonella paratyphi C (strain RKS4594), this protein is Periplasmic trehalase.